Consider the following 216-residue polypeptide: MQKTPKKLTALCHQQSTASCSGSNYSGSNYSGSKCFRLHRLALLACIVALPAYAVDGRVTFQGEIVSDGTCKIETDSKNRTVTLPTVGKANLSLAGQTAAPVPFSITLKECNAADAKKANLLFSGAVTKGQLYLSNAASSGKANNVGIQIVKADGTGSPINVDGSQANSEKAPDTGKEQNSTVIQPRFDYFAHYYATGAATAGEVEATATFQVQYN.

An N-terminal signal peptide occupies residues 1–19 (MQKTPKKLTALCHQQSTAS). Cys-20 is lipidated: N-palmitoyl cysteine. Cys-20 carries S-diacylglycerol cysteine lipidation. Positions 159–180 (PINVDGSQANSEKAPDTGKEQN) are disordered.

The protein belongs to the fimbrial protein family.

Its subcellular location is the cell membrane. It localises to the fimbrium. May be a minor structural protein required for pilus biogenesis. The chain is Minor fimbrial subunit HifD (hifD) from Haemophilus influenzae.